The primary structure comprises 473 residues: Glutamate--tRNA ligase 1 (473 aa).

Residues 11 to 21 carry the 'HIGH' region motif; the sequence is PSPTGFLHIGG. The segment at 111–132 is disordered; sequence REQARKEGRPPRYDGRWRDRAE. Residues 240–244 carry the 'KMSKS' region motif; sequence KLSKR. Lys243 contributes to the ATP binding site.

It belongs to the class-I aminoacyl-tRNA synthetase family. Glutamate--tRNA ligase type 1 subfamily. In terms of assembly, monomer.

The protein localises to the cytoplasm. The enzyme catalyses tRNA(Glu) + L-glutamate + ATP = L-glutamyl-tRNA(Glu) + AMP + diphosphate. Its function is as follows. Catalyzes the attachment of glutamate to tRNA(Glu) in a two-step reaction: glutamate is first activated by ATP to form Glu-AMP and then transferred to the acceptor end of tRNA(Glu). The protein is Glutamate--tRNA ligase 1 of Beijerinckia indica subsp. indica (strain ATCC 9039 / DSM 1715 / NCIMB 8712).